Here is a 445-residue protein sequence, read N- to C-terminus: uncharacterized protein (445 aa).

Transmembrane regions (helical) follow at residues 16–36, 52–72, 98–118, 168–188, 219–239, 243–263, 283–303, and 366–386; these read IVSLGVTASSFLFINGVAFLI, LLASMPSWGLVVTMFAWGYLL, VHSLLWIGVFLFLGGMAAGGC, GLMFPAVVCTLAAVASVLGIV, ASALLMMPQTVTVTFMLVWLI, GWSVAQAGVLVTISQLLGALG, LIAAAAAATLFLLAAVDNEGS, and AAYPTAWALCGVFPLAAVPLV. Residues 417 to 445 form a disordered region; sequence AWPNGPRRPGPPGQPRRVRQGGTAITPPT.

It belongs to the major facilitator superfamily.

Its subcellular location is the cell membrane. This is an uncharacterized protein from Mycobacterium tuberculosis (strain ATCC 25618 / H37Rv).